The following is a 1873-amino-acid chain: MEPSSPQDEGLRKKQPKKPLPEVLPRPPRALFCLTLQNPLRKACISIVEWKPFETIILLTIFANCVALAVYLPMPEDDNNSLNLGLEKLEYFFLTVFSIEAAMKIIAYGFLFHQDAYLRSGWNVLDFIIVFLGVFTAILEQVNVIQSNTAPMSSKGAGLDVKALRAFRVLRPLRLVSGVPSLQVVLNSIFKAMLPLFHIALLVLFMVIIYAIIGLELFKGKMHKTCYYIGTDIVATVENEKPSPCARTGSGRPCTINGSECRGGWPGPNHGITHFDNFGFSMLTVYQCITMEGWTDVLYWVNDAIGNEWPWIYFVTLILLGSFFILNLVLGVLSGEFTKEREKAKSRGTFQKLREKQQLEEDLRGYMSWITQGEVMDVEDLREGKLSLEEGGSDTESLYEIEGLNKIIQFIRHWRQWNRVFRWKCHDLVKSRVFYWLVILIVALNTLSIASEHHNQPLWLTHLQDIANRVLLSLFTIEMLLKMYGLGLRQYFMSIFNRFDCFVVCSGILELLLVESGAMTPLGISVLRCIRLLRLFKITKYWTSLSNLVASLLNSIRSIASLLLLLFLFIIIFALLGMQLFGGRYDFEDTEVRRSNFDNFPQALISVFQVLTGEDWNSVMYNGIMAYGGPSYPGVLVCIYFIILFVCGNYILLNVFLAIAVDNLAEAESLTSAQKAKAEERKRRKMSRGLPDKTEEEKSVMAKKLEQKPKGEGIPTTAKLKVDEFESNVNEVKDPYPSADFPGDDEEDEPEIPVSPRPRPLAELQLKEKAVPIPEASSFFIFSPTNKVRVLCHRIVNATWFTNFILLFILLSSAALAAEDPIRAESVRNQILGYFDIAFTSVFTVEIVLKMTTYGAFLHKGSFCRNYFNILDLLVVAVSLISMGLESSTISVVKILRVLRVLRPLRAINRAKGLKHVVQCVFVAIRTIGNIVLVTTLLQFMFACIGVQLFKGKFFSCNDLSKMTEEECRGYYYVYKDGDPTQMELRPRQWIHNDFHFDNVLSAMMSLFTVSTFEGWPQLLYRAIDSNEEDMGPVYNNRVEMAIFFIIYIILIAFFMMNIFVGFVIVTFQEQGETEYKNCELDKNQRQCVQYALKARPLRCYIPKNPYQYQVWYVVTSSYFEYLMFALIMLNTICLGMQHYHQSEEMNHISDILNVAFTIIFTLEMILKLLAFKARGYFGDPWNVFDFLIVIGSIIDVILSEIDTFLASSGGLYCLGGGCGNVDPDESARISSAFFRLFRVMRLIKLLSRAEGVRTLLWTFIKSFQALPYVALLIVMLFFIYAVIGMQMFGKIALVDGTQINRNNNFQTFPQAVLLLFRCATGEAWQEILLACSYGKLCDPESDYAPGEEYTCGTNFAYYYFISFYMLCAFLIINLFVAVIMDNFDYLTRDWSILGPHHLDEFKAIWAEYDPEAKGRIKHLDVVTLLRRIQPPLGFGKFCPHRVACKRLVGMNMPLNSDGTVTFNATLFALVRTALKIKTEGNFEQANEELRAIIKKIWKRTSMKLLDQVIPPIGDDEVTVGKFYATFLIQEHFRKFMKRQEEYYGYRPKKDTVQIQAGLRTIEEEAAPEIRRTISGDLTAEEELERAMVEAAMEERIFRRTGGLFGQVDTFLERTNSLPPVMANQRPLQFAEIEMEELESPVFLEDFPQDARTNPLARANTNNANANVAYGNSNHSNNQMFSSVHCEREFPGEAETPAAGRGALSHSHRALGPHSKPCAGKLNGQLVQPGMPINQAPPAPCQQPSTDPPERGQRRTSLTGSLQDEAPQRRSSEGSTPRRPAPATALLIQEALVRGGLDTLAADAGFVTATSQALADACQMEPEEVEVAATELLKARESVQGMASVPGSLSRRSSLGSLDQVQGSQETLIPPRP.

The tract at residues 1–23 (MEPSSPQDEGLRKKQPKKPLPEV) is disordered. Over 1 to 51 (MEPSSPQDEGLRKKQPKKPLPEVLPRPPRALFCLTLQNPLRKACISIVEWK) the chain is Cytoplasmic. An I repeat occupies 38 to 337 (NPLRKACISI…LVLGVLSGEF (300 aa)). The helical transmembrane segment at 52–70 (PFETIILLTIFANCVALAV) threads the bilayer. The Extracellular segment spans residues 71–85 (YLPMPEDDNNSLNLG). The N-linked (GlcNAc...) asparagine glycan is linked to asparagine 79. A helical transmembrane segment spans residues 86–106 (LEKLEYFFLTVFSIEAAMKII). Topologically, residues 107–115 (AYGFLFHQD) are cytoplasmic. A helical transmembrane segment spans residues 116–136 (AYLRSGWNVLDFIIVFLGVFT). Residues 137 to 160 (AILEQVNVIQSNTAPMSSKGAGLD) lie on the Extracellular side of the membrane. Residues 161–179 (VKALRAFRVLRPLRLVSGV) traverse the membrane as a helical segment. The Cytoplasmic segment spans residues 180–196 (PSLQVVLNSIFKAMLPL). A helical membrane pass occupies residues 197–218 (FHIALLVLFMVIIYAIIGLELF). Residues 219–279 (KGKMHKTCYY…HGITHFDNFG (61 aa)) lie on the Extracellular side of the membrane. 2 disulfide bridges follow: cysteine 226–cysteine 254 and cysteine 245–cysteine 261. A glycan (N-linked (GlcNAc...) asparagine) is linked at asparagine 257. The segment at residues 280 to 301 (FSMLTVYQCITMEGWTDVLYWV) is an intramembrane region (pore-forming). The Selectivity filter of repeat I signature appears at 290–293 (TMEG). Glutamate 292 is a Ca(2+) binding site. Topologically, residues 302–309 (NDAIGNEW) are extracellular. The chain crosses the membrane as a helical span at residues 310–330 (PWIYFVTLILLGSFFILNLVL). The Cytoplasmic segment spans residues 331 to 432 (GVLSGEFTKE…WKCHDLVKSR (102 aa)). The segment at 357–374 (QQLEEDLRGYMSWITQGE) is binding to the beta subunit. Serine 393 and serine 397 each carry phosphoserine. An II repeat occupies 418–664 (NRVFRWKCHD…VFLAIAVDNL (247 aa)). The helical transmembrane segment at 433 to 451 (VFYWLVILIVALNTLSIAS) threads the bilayer. Topologically, residues 452–462 (EHHNQPLWLTH) are extracellular. A helical membrane pass occupies residues 463-483 (LQDIANRVLLSLFTIEMLLKM). The Cytoplasmic segment spans residues 484–494 (YGLGLRQYFMS). A helical transmembrane segment spans residues 495-514 (IFNRFDCFVVCSGILELLLV). The Extracellular segment spans residues 515–523 (ESGAMTPLG). A helical transmembrane segment spans residues 524-542 (ISVLRCIRLLRLFKITKYW). Residues 543-561 (TSLSNLVASLLNSIRSIAS) lie on the Cytoplasmic side of the membrane. Residues 562–581 (LLLLLFLFIIIFALLGMQLF) traverse the membrane as a helical segment. Over 582–601 (GGRYDFEDTEVRRSNFDNFP) the chain is Extracellular. The pore-forming intramembrane region spans 602-623 (QALISVFQVLTGEDWNSVMYNG). The short motif at 612-615 (TGED) is the Selectivity filter of repeat II element. Glutamate 614 serves as a coordination point for Ca(2+). Residues 624–633 (IMAYGGPSYP) lie on the Extracellular side of the membrane. A helical transmembrane segment spans residues 634 to 653 (GVLVCIYFIILFVCGNYILL). Residues 654–799 (NVFLAIAVDN…VLCHRIVNAT (146 aa)) lie on the Cytoplasmic side of the membrane. Disordered stretches follow at residues 673–717 (AQKA…IPTT) and 731–757 (EVKDPYPSADFPGDDEEDEPEIPVSPR). Serine 687 carries the phosphoserine; by PKA modification. Residues 690-711 (LPDKTEEEKSVMAKKLEQKPKG) are compositionally biased toward basic and acidic residues. Acidic residues predominate over residues 742-751 (PGDDEEDEPE). The tract at residues 747-760 (EDEPEIPVSPRPRP) is interaction with STAC, STAC2 and STAC3 (via SH3 domains). An III repeat occupies 786 to 1068 (NKVRVLCHRI…IFVGFVIVTF (283 aa)). Residues 800 to 818 (WFTNFILLFILLSSAALAA) traverse the membrane as a helical segment. Over 819-830 (EDPIRAESVRNQ) the chain is Extracellular. The helical transmembrane segment at 831 to 850 (ILGYFDIAFTSVFTVEIVLK) threads the bilayer. Residues 851-866 (MTTYGAFLHKGSFCRN) lie on the Cytoplasmic side of the membrane. A helical membrane pass occupies residues 867 to 885 (YFNILDLLVVAVSLISMGL). Topologically, residues 886–892 (ESSTISV) are extracellular. Residues 893 to 911 (VKILRVLRVLRPLRAINRA) traverse the membrane as a helical segment. The Cytoplasmic portion of the chain corresponds to 912–930 (KGLKHVVQCVFVAIRTIGN). Residues 931 to 950 (IVLVTTLLQFMFACIGVQLF) form a helical membrane-spanning segment. The Extracellular segment spans residues 951 to 1000 (KGKFFSCNDLSKMTEEECRGYYYVYKDGDPTQMELRPRQWIHNDFHFDNV). Cysteine 957 and cysteine 968 are disulfide-bonded. The interval 988-1077 (RQWIHNDFHF…FQEQGETEYK (90 aa)) is dihydropyridine binding. Positions 1001–1021 (LSAMMSLFTVSTFEGWPQLLY) form an intramembrane region, pore-forming. Residues 1012 to 1015 (TFEG) carry the Selectivity filter of repeat III motif. Glutamate 1014 contributes to the Ca(2+) binding site. Over 1022–1038 (RAIDSNEEDMGPVYNNR) the chain is Extracellular. Residues 1039-1060 (VEMAIFFIIYIILIAFFMMNIF) form a helical membrane-spanning segment. Residues 1061 to 1118 (VGFVIVTFQEQGETEYKNCELDKNQRQCVQYALKARPLRCYIPKNPYQYQVWYVVTSS) lie on the Cytoplasmic side of the membrane. One copy of the IV repeat lies at 1105-1384 (NPYQYQVWYV…LFVAVIMDNF (280 aa)). The chain crosses the membrane as a helical span at residues 1119–1140 (YFEYLMFALIMLNTICLGMQHY). The Extracellular segment spans residues 1141-1148 (HQSEEMNH). Residues 1149–1170 (ISDILNVAFTIIFTLEMILKLL) form a helical membrane-spanning segment. Residues 1171–1180 (AFKARGYFGD) are Cytoplasmic-facing. The chain crosses the membrane as a helical span at residues 1181 to 1200 (PWNVFDFLIVIGSIIDVILS). The Extracellular portion of the chain corresponds to 1201–1231 (EIDTFLASSGGLYCLGGGCGNVDPDESARIS). A helical membrane pass occupies residues 1232–1250 (SAFFRLFRVMRLIKLLSRA). Residues 1251-1268 (EGVRTLLWTFIKSFQALP) lie on the Cytoplasmic side of the membrane. The chain crosses the membrane as a helical span at residues 1269 to 1289 (YVALLIVMLFFIYAVIGMQMF). Residues 1290 to 1311 (GKIALVDGTQINRNNNFQTFPQ) lie on the Extracellular side of the membrane. Residues 1312–1330 (AVLLLFRCATGEAWQEILL) constitute an intramembrane region (pore-forming). The Selectivity filter of repeat IV motif lies at 1321–1324 (TGEA). Residues 1331–1356 (ACSYGKLCDPESDYAPGEEYTCGTNF) lie on the Extracellular side of the membrane. The segment at 1337–1403 (LCDPESDYAP…LGPHHLDEFK (67 aa)) is dihydropyridine binding. A disulfide bridge links cysteine 1338 with cysteine 1352. The phenylalkylamine binding stretch occupies residues 1349 to 1391 (EYTCGTNFAYYYFISFYMLCAFLIINLFVAVIMDNFDYLTRDW). A helical membrane pass occupies residues 1357–1381 (AYYYFISFYMLCAFLIINLFVAVIM). Over 1382-1873 (DNFDYLTRDW…SQETLIPPRP (492 aa)) the chain is Cytoplasmic. An interaction with calmodulin region spans residues 1522–1542 (KFYATFLIQEHFRKFMKRQEE). Serine 1575 bears the Phosphoserine; by PKA and CAMK2 mark. Threonine 1579 is subject to Phosphothreonine; by CK2. Serine 1617 carries the post-translational modification Phosphoserine; by PKA. 2 disordered regions span residues 1689–1782 (EFPG…RPAP) and 1841–1873 (GMASVPGSLSRRSSLGSLDQVQGSQETLIPPRP). Over residues 1847–1858 (GSLSRRSSLGSL) the composition is skewed to low complexity.

The protein belongs to the calcium channel alpha-1 subunit (TC 1.A.1.11) family. CACNA1S subfamily. In terms of assembly, component of a calcium channel complex consisting of a pore-forming alpha subunit (CACNA1S) and the ancillary subunits CACNB1 or CACNB2, CACNG1 and CACNA2D1. The channel complex contains alpha, beta, gamma and delta subunits in a 1:1:1:1 ratio, i.e. it contains either CACNB1 or CACNB2. CACNA1S channel activity is modulated by the auxiliary subunits (CACNB1 or CACNB2, CACNG1 and CACNA2D1). Interacts with DYSF and JSRP1. Interacts with RYR1. Interacts with STAC, STAC2 and STAC3 (via their SH3 domains). Interaction with STAC3 promotes expression at the cell membrane. Interaction with STAC2 promotes expression at the cell membrane, but with much lower efficiency than STAC3. Interaction with STAC1 leads to very low levels expression at the cell membrane, much less than the levels observed upon interaction with STAC3 and STAC2. Interacts with CALM. The alpha-1S subunit is found in two isoforms in the skeletal muscle: a minor form of 212 kDa containing the complete amino acid sequence, and a major form of 190 kDa derived from the full-length form by post-translational proteolysis close to Phe-1690. Post-translationally, phosphorylated. Phosphorylation by PKA activates the calcium channel. Both the minor and major forms are phosphorylated in vitro by PKA. Phosphorylation at Ser-1575 is involved in beta-adrenergic-mediated regulation of the channel. In terms of tissue distribution, detected in skeletal muscle T-tubules (at protein level).

The protein localises to the cell membrane. It is found in the sarcolemma. The protein resides in the T-tubule. It carries out the reaction Ca(2+)(in) = Ca(2+)(out). With respect to regulation, channel activity is blocked by dihydropyridines (DHP), phenylalkylamines, and by benzothiazepines. Pore-forming, alpha-1S subunit of the voltage-gated calcium channel that gives rise to L-type calcium currents in skeletal muscle. Calcium channels containing the alpha-1S subunit play an important role in excitation-contraction coupling in skeletal muscle via their interaction with RYR1, which triggers Ca(2+) release from the sarcplasmic reticulum and ultimately results in muscle contraction. Long-lasting (L-type) calcium channels belong to the 'high-voltage activated' (HVA) group. This is Voltage-dependent L-type calcium channel subunit alpha-1S (CACNA1S) from Oryctolagus cuniculus (Rabbit).